Reading from the N-terminus, the 316-residue chain is Zinc finger protein 330 (316 aa).

The interval 1-24 (MPKKKTGARKKAENRREREKQLRA) is disordered. Residues 3–11 (KKKTGARKK) carry the Nuclear localization signal motif. Residues 10-22 (KKAENRREREKQL) show a composition bias toward basic and acidic residues. 4 C4-type zinc fingers span residues 42–58 (CDKC…CYFC), 67–104 (CAQC…CDFC), 129–149 (CVEC…CSFC), and 175–189 (CVSC…CLRC). The tract at residues 227–299 (SMSTRSLKFG…ESSDLFNNLN (73 aa)) is disordered. The segment covering 268-291 (DDDEEEDEAEDEEEEDGKDSDAES) has biased composition (acidic residues). Residue Ser-287 is modified to Phosphoserine.

It belongs to the NOA36 family.

The protein localises to the nucleus. It is found in the nucleolus. It localises to the chromosome. The protein resides in the centromere. This is Zinc finger protein 330 (Znf330) from Mus musculus (Mouse).